The chain runs to 390 residues: Alcohol dehydrogenase-like 7 (390 aa).

Zn(2+) contacts are provided by Cys-56, Ser-58, His-78, Cys-108, Cys-111, Cys-114, Cys-122, and Cys-187. Ser-58 and His-78 together coordinate an alcohol. Ser-58 is a binding site for NAD(+). NAD(+)-binding positions include 212–217, Asp-236, Lys-241, 306–308, Phe-334, and Arg-384; these read GLGSIG and LGV.

Belongs to the zinc-containing alcohol dehydrogenase family. Class-III subfamily. As to quaternary structure, homodimer. It depends on Zn(2+) as a cofactor.

Its subcellular location is the cytoplasm. The enzyme catalyses a primary alcohol + NAD(+) = an aldehyde + NADH + H(+). The catalysed reaction is a secondary alcohol + NAD(+) = a ketone + NADH + H(+). This is Alcohol dehydrogenase-like 7 from Arabidopsis thaliana (Mouse-ear cress).